The following is a 141-amino-acid chain: Large ribosomal subunit protein uL11 (141 aa).

The protein belongs to the universal ribosomal protein uL11 family. As to quaternary structure, part of the ribosomal stalk of the 50S ribosomal subunit. Interacts with L10 and the large rRNA to form the base of the stalk. L10 forms an elongated spine to which L12 dimers bind in a sequential fashion forming a multimeric L10(L12)X complex. One or more lysine residues are methylated.

Forms part of the ribosomal stalk which helps the ribosome interact with GTP-bound translation factors. This chain is Large ribosomal subunit protein uL11, found in Sulfurimonas denitrificans (strain ATCC 33889 / DSM 1251) (Thiomicrospira denitrificans (strain ATCC 33889 / DSM 1251)).